Reading from the N-terminus, the 40-residue chain is Photosystem II reaction center protein J (40 aa).

A helical membrane pass occupies residues 8-28 (IPLWLVALVAGTGVLVVVGLF).

Belongs to the PsbJ family. In terms of assembly, PSII is composed of 1 copy each of membrane proteins PsbA, PsbB, PsbC, PsbD, PsbE, PsbF, PsbH, PsbI, PsbJ, PsbK, PsbL, PsbM, PsbT, PsbX, PsbY, PsbZ, Psb30/Ycf12, peripheral proteins PsbO, CyanoQ (PsbQ), PsbU, PsbV and a large number of cofactors. It forms dimeric complexes.

The protein resides in the cellular thylakoid membrane. One of the components of the core complex of photosystem II (PSII). PSII is a light-driven water:plastoquinone oxidoreductase that uses light energy to abstract electrons from H(2)O, generating O(2) and a proton gradient subsequently used for ATP formation. It consists of a core antenna complex that captures photons, and an electron transfer chain that converts photonic excitation into a charge separation. The protein is Photosystem II reaction center protein J of Trichodesmium erythraeum (strain IMS101).